Consider the following 1202-residue polypeptide: Caffeine-induced protein 16 (1202 aa).

A PAP-associated domain is found at 1105–1159 (NIALLLRGFFCYYGLTTQYSFDWEAYMIDISSSQLKRKSTEFKDCPFVVLDPFLK).

The chain is Caffeine-induced protein 16 (cid16) from Schizosaccharomyces pombe (strain 972 / ATCC 24843) (Fission yeast).